A 317-amino-acid chain; its full sequence is Transaldolase (317 aa).

The Schiff-base intermediate with substrate role is filled by Lys132.

The protein belongs to the transaldolase family. Type 1 subfamily. In terms of assembly, homodimer.

It localises to the cytoplasm. The catalysed reaction is D-sedoheptulose 7-phosphate + D-glyceraldehyde 3-phosphate = D-erythrose 4-phosphate + beta-D-fructose 6-phosphate. The protein operates within carbohydrate degradation; pentose phosphate pathway; D-glyceraldehyde 3-phosphate and beta-D-fructose 6-phosphate from D-ribose 5-phosphate and D-xylulose 5-phosphate (non-oxidative stage): step 2/3. Its function is as follows. Transaldolase is important for the balance of metabolites in the pentose-phosphate pathway. This is Transaldolase from Histophilus somni (strain 129Pt) (Haemophilus somnus).